Reading from the N-terminus, the 144-residue chain is 3-dehydroquinate dehydratase (144 aa).

Y24 functions as the Proton acceptor in the catalytic mechanism. The substrate site is built by N73, H79, and D86. H99 acts as the Proton donor in catalysis. Substrate-binding positions include L100 to S101 and R110.

Belongs to the type-II 3-dehydroquinase family. Homododecamer.

The enzyme catalyses 3-dehydroquinate = 3-dehydroshikimate + H2O. It participates in metabolic intermediate biosynthesis; chorismate biosynthesis; chorismate from D-erythrose 4-phosphate and phosphoenolpyruvate: step 3/7. In terms of biological role, catalyzes a trans-dehydration via an enolate intermediate. In Shewanella putrefaciens (strain CN-32 / ATCC BAA-453), this protein is 3-dehydroquinate dehydratase.